The primary structure comprises 159 residues: Regulator of G-protein signaling 13 (159 aa).

Residues 34 to 150 (SFENLMATKY…LKSEMYQKLL (117 aa)) form the RGS domain.

In terms of biological role, inhibits signal transduction by increasing the GTPase activity of G protein alpha subunits thereby driving them into their inactive GDP-bound form. Binds to both G(i)-alpha and G(q)-alpha. This Homo sapiens (Human) protein is Regulator of G-protein signaling 13 (RGS13).